Here is a 494-residue protein sequence, read N- to C-terminus: Inosine-5'-monophosphate dehydrogenase (494 aa).

2 CBS domains span residues 93-154 (IIRN…DEKI) and 158-217 (MTTN…CKDS). NAD(+)-binding positions include D251 and 301-303 (GIG). 2 residues coordinate K(+): G303 and G305. An IMP-binding site is contributed by S306. C308 is a binding site for K(+). C308 acts as the Thioimidate intermediate in catalysis. Residues 341-343 (DGG), 364-365 (GS), and 388-392 (YRGMG) contribute to the IMP site. R406 acts as the Proton acceptor in catalysis. E421 lines the IMP pocket. K(+) contacts are provided by E475, S476, and H477.

Belongs to the IMPDH/GMPR family. As to quaternary structure, homotetramer. K(+) serves as cofactor.

It catalyses the reaction IMP + NAD(+) + H2O = XMP + NADH + H(+). The protein operates within purine metabolism; XMP biosynthesis via de novo pathway; XMP from IMP: step 1/1. With respect to regulation, mycophenolic acid (MPA) is a non-competitive inhibitor that prevents formation of the closed enzyme conformation by binding to the same site as the amobile flap. In contrast, mizoribine monophosphate (MZP) is a competitive inhibitor that induces the closed conformation. MPA is a potent inhibitor of mammalian IMPDHs but a poor inhibitor of the bacterial enzymes. MZP is a more potent inhibitor of bacterial IMPDH. Catalyzes the conversion of inosine 5'-phosphate (IMP) to xanthosine 5'-phosphate (XMP), the first committed and rate-limiting step in the de novo synthesis of guanine nucleotides, and therefore plays an important role in the regulation of cell growth. This chain is Inosine-5'-monophosphate dehydrogenase, found in Chlorobaculum tepidum (strain ATCC 49652 / DSM 12025 / NBRC 103806 / TLS) (Chlorobium tepidum).